The sequence spans 382 residues: Serine/threonine-protein kinase (382 aa).

Over residues 1–10 (MENKQCDHLT) the composition is skewed to basic and acidic residues. The tract at residues 1 to 75 (MENKQCDHLT…ASESDEDDDD (75 aa)) is disordered. Polar residues predominate over residues 12-24 (WFSTTSDASESMD). The segment covering 45 to 75 (ADEDLYSDISEGDLEYSDCDSASESDEDDDD) has biased composition (acidic residues). Residues 93-379 (YTVIKTLTPG…AEELLSYPMF (287 aa)) form the Protein kinase domain. ATP contacts are provided by residues 99–107 (LTPGSEGRV) and lysine 122. Aspartate 207 (proton acceptor) is an active-site residue.

Belongs to the protein kinase superfamily. Ser/Thr protein kinase family.

It catalyses the reaction L-seryl-[protein] + ATP = O-phospho-L-seryl-[protein] + ADP + H(+). The catalysed reaction is L-threonyl-[protein] + ATP = O-phospho-L-threonyl-[protein] + ADP + H(+). The sequence is that of Serine/threonine-protein kinase (US2) from Equus caballus (Horse).